Here is a 124-residue protein sequence, read N- to C-terminus: p53-regulated apoptosis-inducing protein 1 (124 aa).

Residues 1–16 show a composition bias toward polar residues; that stretch reads MGSSSEASFRSAQASC. Residues 1–46 form a disordered region; the sequence is MGSSSEASFRSAQASCSGARRQGLGRGDQNLSVMPPNGRAQTHTPG.

Only found to be expressed in thymus.

The protein localises to the mitochondrion. Its function is as follows. May play an important role in mediating p53/TP53-dependent apoptosis. In Homo sapiens (Human), this protein is p53-regulated apoptosis-inducing protein 1 (TP53AIP1).